Consider the following 301-residue polypeptide: MASVTYIDDSGSEVIDPPKTEVLDVTELAGDPVPHSPKPNVVVSSSVRELLECPVCLSAMYPPIHQCSNGHTLCSGCKPRVHNRCPTCRHELGNIRCLALEKVAASLELPCKYQNFGCVGIYPYYCKLKHESQCQYRPYSCPYAGSECTVAGDIPYLVNHLKDDHKVDMHNGCTFNHRYVKSNPHEVENATWMLTVFSCFGQYFCLHFEAFQLGMAPVYIAFLRFMGDDLEAKNYSYSLEVGGTGRKMIWQGVPRSIRDSHRKVRDSYDGLIIQRNMALFFSGGERKELKLRVTGRIWKEQ.

The RING-type; degenerate zinc finger occupies 53–89 (CPVCLSAMYPPIHQCSNGHTLCSGCKPRVHNRCPTCR). The SIAH-type; degenerate zinc-finger motif lies at 106–166 (SLELPCKYQN…LVNHLKDDHK (61 aa)).

It belongs to the SINA (Seven in absentia) family. Homodimer. Interacts with NEK6. Interacts with SKIPA.

The protein resides in the nucleus. The protein localises to the cytoplasm. It catalyses the reaction S-ubiquitinyl-[E2 ubiquitin-conjugating enzyme]-L-cysteine + [acceptor protein]-L-lysine = [E2 ubiquitin-conjugating enzyme]-L-cysteine + N(6)-ubiquitinyl-[acceptor protein]-L-lysine.. It participates in protein modification; protein ubiquitination. Its function is as follows. E3 ubiquitin-protein ligase that mediates ubiquitination and subsequent proteasomal degradation of target proteins. E3 ubiquitin ligases accept ubiquitin from an E2 ubiquitin-conjugating enzyme in the form of a thioester and then directly transfers the ubiquitin to targeted substrates. Plays a negative role in drought stress tolerance through transcriptional and post-translational regulation of diverse stress-related genes. Interacts with the serine/threonine-protein kinase NEK6 and promotes its degradation via the 26S proteasome-dependent pathway. The protein is E3 ubiquitin-protein ligase DIS1 of Oryza sativa subsp. japonica (Rice).